A 193-amino-acid chain; its full sequence is 3-isopropylmalate dehydratase small subunit (193 aa).

The protein belongs to the LeuD family. LeuD type 1 subfamily. In terms of assembly, heterodimer of LeuC and LeuD.

It carries out the reaction (2R,3S)-3-isopropylmalate = (2S)-2-isopropylmalate. It participates in amino-acid biosynthesis; L-leucine biosynthesis; L-leucine from 3-methyl-2-oxobutanoate: step 2/4. Its function is as follows. Catalyzes the isomerization between 2-isopropylmalate and 3-isopropylmalate, via the formation of 2-isopropylmaleate. The sequence is that of 3-isopropylmalate dehydratase small subunit from Bacillus cereus (strain ATCC 10987 / NRS 248).